A 257-amino-acid polypeptide reads, in one-letter code: Probable amino-acid ABC transporter-binding protein HI_1080 (257 aa).

The first 23 residues, 1 to 23 (MKKLLFTTALLTGAIAFSTFSHA), serve as a signal peptide directing secretion.

It belongs to the bacterial solute-binding protein 3 family.

Its subcellular location is the periplasm. In terms of biological role, probably part of a binding-protein-dependent transport system for an amino acid. The chain is Probable amino-acid ABC transporter-binding protein HI_1080 from Haemophilus influenzae (strain ATCC 51907 / DSM 11121 / KW20 / Rd).